We begin with the raw amino-acid sequence, 313 residues long: Porphobilinogen deaminase (313 aa).

An S-(dipyrrolylmethanemethyl)cysteine modification is found at cysteine 242.

This sequence belongs to the HMBS family. As to quaternary structure, monomer. Dipyrromethane is required as a cofactor.

It carries out the reaction 4 porphobilinogen + H2O = hydroxymethylbilane + 4 NH4(+). Its pathway is porphyrin-containing compound metabolism; protoporphyrin-IX biosynthesis; coproporphyrinogen-III from 5-aminolevulinate: step 2/4. Tetrapolymerization of the monopyrrole PBG into the hydroxymethylbilane pre-uroporphyrinogen in several discrete steps. In Pseudomonas entomophila (strain L48), this protein is Porphobilinogen deaminase.